The sequence spans 142 residues: Hemoglobin subunit alpha-1 (142 aa).

Ser1 carries the N-acetylserine modification. The Globin domain maps to 1–142 (SLSDKDKAAV…VALALAQRYR (142 aa)). His59 contributes to the O2 binding site. His88 lines the heme b pocket.

The protein belongs to the globin family. Hb1 is a heterotetramer of two alpha-2 chains and two beta chains. As to expression, red blood cells.

Involved in oxygen transport from gills to the various peripheral tissues. This chain is Hemoglobin subunit alpha-1 (hba1), found in Notothenia neglecta (Yellowbelly rockcod).